Here is a 309-residue protein sequence, read N- to C-terminus: Protease HtpX homolog (309 aa).

2 helical membrane-spanning segments follow: residues 7–27 (AILLAGLTALFMGVGYLIGGA) and 28–48 (SGAMIALVVAAATNIFAYWNS). His130 contributes to the Zn(2+) binding site. Residue Glu131 is part of the active site. His134 is a Zn(2+) binding site. 2 consecutive transmembrane segments (helical) span residues 145 to 165 (VTATIAGAVSMLAQFGMFFGG) and 173 to 193 (GLGVIGSIAMMILAPIAAMLV). Glu202 serves as a coordination point for Zn(2+).

It belongs to the peptidase M48B family. Zn(2+) serves as cofactor.

Its subcellular location is the cell inner membrane. This chain is Protease HtpX homolog, found in Rhodopseudomonas palustris (strain BisA53).